A 1665-amino-acid chain; its full sequence is Protein scribble homolog (1665 aa).

A sufficient for targeting to adherens junction and to inhibit cell proliferation region spans residues 1–804 (MLKCIPLWRC…MRVWRERMVE (804 aa)). Ser-37 is modified (phosphoserine). 16 LRR repeats span residues 37–58 (SLEE…FFRL), 60–81 (NLRK…VANF), 83–104 (QLVE…IKFC), 106–127 (ALEI…FTQL), 129–150 (SLAH…VGNL), 152–174 (NLVT…SFLV), 175–197 (KLEQ…GALP), 198–219 (NLRE…LGNL), 221–243 (RLVC…GGLA), 244–265 (LLTD…IGQL), 267–288 (QLSI…IGDC), 290–312 (NLSE…GKLT), 313–334 (KLTN…IGGC), 336–357 (ALSV…LAHT), 359–381 (ELHV…THLN), and 382–402 (LKAL…QTED). Residue Thr-378 is modified to Phosphothreonine. 2 disordered regions span residues 422 to 615 (PSLE…HFKI) and 635 to 689 (REGP…SAPS). The segment covering 428–437 (GQQSSPSESC) has biased composition (polar residues). The segment covering 452-463 (DTLEGEEDAEEA) has biased composition (acidic residues). Residues 455–475 (EGEEDAEEAAAEKRGLQRRAT) adopt a coiled-coil conformation. Residue Thr-475 is modified to Phosphothreonine. Basic and acidic residues-rich tracts occupy residues 479 to 494 (SELK…RRNE) and 570 to 580 (FAEDTLIPRED). Ser-583 is modified (phosphoserine). Positions 653–687 (RAHEEEEEEEEENRDEEEGEATTEEDDKEEAVASA) form a coiled coil. The segment covering 657–681 (EEEEEEEENRDEEEGEATTEEDDKE) has biased composition (acidic residues). Residues Thr-674 and Thr-675 each carry the phosphothreonine modification. Phosphoserine occurs at positions 694 and 750. Residues 703–1215 (IEPARIEEEE…SLESISSIDR (513 aa)) form an interaction with ARHGEF7 region. The region spanning 714–801 (TLTIVRQTGG…AVQMRVWRER (88 aa)) is the PDZ 1 domain. The interval 714–1180 (TLTIVRQTGG…TVLVCDGFDT (467 aa)) is required for interaction with VIM. At Thr-812 the chain carries Phosphothreonine. Phosphoserine occurs at positions 821, 861, and 925. PDZ domains lie at 848 to 936 (AACL…ERET), 990 to 1079 (EICL…RRDP), and 1086 to 1180 (ELCI…GFDT). Residues Ser-1126, Ser-1206, Ser-1209, Ser-1212, Ser-1218, Ser-1262, Ser-1265, and Ser-1284 each carry the phosphoserine modification. A compositionally biased stretch (basic and acidic residues) spans 1213 to 1228 (IDRELSPEGPGKEKEL). The segment at 1213–1246 (IDRELSPEGPGKEKELASQALPWESESAETTGRN) is disordered. Disordered regions lie at residues 1263 to 1325 (AGSL…DELP) and 1341 to 1501 (VHPP…AERR). Polar residues predominate over residues 1264 to 1277 (GSLQRGPSATTGGK). At Lys-1291 the chain carries Omega-N-methylarginine. Position 1299 is a phosphoserine (Ala-1299). An Omega-N-methylarginine modification is found at Arg-1312. At Ser-1320 the chain carries Phosphoserine. Position 1353 is a phosphothreonine (Thr-1353). At Ser-1359 the chain carries Phosphoserine. Residues 1364 to 1376 (SFRERQKYFELEV) show a composition bias toward basic and acidic residues. Position 1389 is a phosphoserine (Ser-1389). Residues 1390–1421 (LVGADDLRKMQEEEARKLQQKRAQMLREEAVT) are a coiled coil. Positions 1394–1406 (DDLRKMQEEEARK) are enriched in basic and acidic residues. Ser-1455 and Ser-1458 each carry phosphoserine. Positions 1471 to 1482 (AKAERRHQERLR) are enriched in basic and acidic residues. Phosphoserine occurs at positions 1485, 1496, and 1518. Residues 1530–1577 (LSKSQEGRGKRGPLERLAEAPSPAPTPSPTPLEDFGLQTSASPGRLPL) form a disordered region. Residues 1534 to 1547 (QEGRGKRGPLERLA) show a composition bias toward basic and acidic residues. Residue Ser-1551 is modified to Phosphoserine. Thr-1555 is modified (phosphothreonine). 3 positions are modified to phosphoserine: Ser-1557, Ser-1571, and Ser-1601. Residues 1632 to 1665 (GRPSPGAVGPEDMTLCSSRRSVRPGRRGLGPVPS) form a disordered region.

This sequence belongs to the LAP (LRR and PDZ) protein family. As to quaternary structure, interacts with UBE3A. Interacts with PAK1 and PAK2. Interacts (via PDZ domains) with VANGL2. Interacts (via PDZ domains) with LPP and TRIP6; the interaction is direct. Interacts (via PDZ domains) with TJP2. Interacts (via PDZ domains) with APC; may mediate APC targeting to adherens junctions of epithelial cells. Interacts (via PDZ domains) with TSHR; regulates TSHR trafficking and function. Interacts with ARHGEF7 and GIT1; interacts directly with ARHGEF7. Interacts with CTNNB1. Interacts with MAPK12. Interacts (via PDZ domains 1 and 3) with MCC. Interacts with DLG5. Interacts with STK4/MST1 and LATS1 in the presence of DLG5. Interacts (via PDZ domain 3) with CRTAM (via PDZ-binding motif); the interaction promotes CRTAM and SCRIB polarization in a subset of CD4+ T-cells. Interacts with YES1, when YES1 is in a closed conformation; the interaction facilitates YES1 autophosphorylation. Interacts (via PDZ domains) with VIM; the interaction protects SCRIB from proteasomal degradation and facilitates SCRIB localization to intermediate filaments, the interaction is reduced by cell contact inhibition. Ubiquitinated; targeted for UBE3A-dependent multiubiquitination and degraded. In terms of processing, palmitoylated. Could be depalmitoylated by LYPLA1 and/or LYPLA2. Palmitoylation of SCRIB by ZDHHC7 is required for its localization to cell-cell junctions, function in the establishement of epithelial cell polarity and the regulation of downstream signaling pathways important for epithelial cell differentiation. In terms of tissue distribution, expressed in CD4+ T-cells (at protein level). Found in a wide range of tissues including liver, kidney and spleen. Also expressed in the brain (at protein level).

Its subcellular location is the cell membrane. It is found in the cell junction. It localises to the adherens junction. The protein resides in the cell projection. The protein localises to the lamellipodium. Its subcellular location is the cytoplasm. It is found in the postsynapse. It localises to the presynapse. In terms of biological role, scaffold protein involved in different aspects of polarized cell differentiation regulating epithelial and neuronal morphogenesis and T-cell polarization. Via its interaction with CRTAM, required for the late phase polarization of a subset of CD4+ T-cells, which in turn regulates TCR-mediated proliferation and IFNG and IL22 production. Plays a role in cell directional movement, cell orientation, cell sheet organization and Golgi complex polarization at the cell migration front. Promotes epithelial cell layer barrier function via maintaining cell-cell adhesion. Most probably functions in the establishment of apico-basal cell polarity. May function in cell proliferation regulating progression from G1 to S phase and as a positive regulator of apoptosis for instance during acinar morphogenesis of the mammary epithelium. May regulate cell invasion via MAPK-mediated cell migration and adhesion. May play a role in exocytosis and in the targeting of synaptic vesicles to synapses. Functions as an activator of Rac GTPase activity. The polypeptide is Protein scribble homolog (Mus musculus (Mouse)).